The primary structure comprises 606 residues: MAAESSYGFVYGVSGPVVTAEKMAGSAMYELVRVGHQELVGEIIRLEGDYATIQVYEETSGVTIGDPVLRTGKPLSVELGPGIMGSIFDGIQRPLKDIADITQSIYIPKGVSTNALSREARWDFVVSKDLRVGGHVTGGDIIGTVDENLLIKHKILLPPSACGTITFVAPSGQYTVEDTLLELEFAGRKQKFSMLQIWPVRSPRPVTEKLAANNPLLCGQRVLDALFPCVQGGTTAIPGAFGCGKTVISQSLSKYSNSDAIIYVGCGERGNEMSEVLRDFPELTMEVEGVTTSIMKRTALVANTSNMPVAAREASIYTGITLAEYFRDMGLNVAMMADSTSRWAEALREISGRLGEMPADSGYPAYLAARLASFYERAGRVKCLGSPEREGSVTIVGAVSPPGGDFADPVTSATLGIVQVFWGLDKKLAQRKHFPSINWLISYSEYMRALEEFYEKNYPEFVSLRTKCKEILQEEEDLSEIVQLVGKASLAESDKVTLEVAKIIKDDFLQQNGYTKYDRFCPFYKTVGMLKNMIGFYDLARHAVEATAQSDNKITWNVIKDSMGDLIYQLSAMKFKDPVADGEAKIRKDYEDLAEAMANAFRNLED.

N-acetylalanine is present on Ala-2. 240–247 contacts ATP; it reads AFGCGKTV.

Belongs to the ATPase alpha/beta chains family. As to quaternary structure, V-ATPase is a heteromultimeric enzyme made up of two complexes: the ATP-hydrolytic V1 complex and the proton translocation V0 complex. The V1 complex consists of three catalytic AB heterodimers that form a heterohexamer, three peripheral stalks each consisting of EG heterodimers, one central rotor including subunits D and F, and the regulatory subunits C and H. The proton translocation complex V0 consists of the proton transport subunit a, a ring of proteolipid subunits c9c'', rotary subunit d, subunits e and f, and the accessory subunits vah-19/Ac45 and vah-20/PRR. In terms of tissue distribution, expressed in proximal but not distal germ cells.

The catalysed reaction is ATP + H2O + 4 H(+)(in) = ADP + phosphate + 5 H(+)(out). With respect to regulation, ATP hydrolysis occurs at the interface between the nucleotide-binding domains of subunits A and B. ATP hydrolysis triggers a conformational change in the subunits D and F, which induces a shift of subunit d. The c-ring is subsequently rotated and results in a continuous proton translocation across the membrane. Its function is as follows. Catalytic subunit of the V1 complex of vacuolar(H+)-ATPase (V-ATPase), a multisubunit enzyme composed of a peripheral complex (V1) that hydrolyzes ATP and a membrane integral complex (V0) that translocates protons. V-ATPase is responsible for acidifying and maintaining the pH of intracellular compartments and in some cell types, is targeted to the plasma membrane, where it is responsible for acidifying the extracellular environment. Required along with other vacuolar ATPase components for the removal of protein aggregates which form in immature oocytes in the distal gonad. This removal occurs as the oocytes mature and move to the proximal gonad, is triggered by the introduction of sperm through mating and occurs before fertilization. The introduction of sperm triggers V-ATPase accumulation in proximal oocytes and induces lysosomal acidification which leads to engulfing of protein aggregates by lysosomes and subsequent clearance of the aggregates. Lysosomal acidification also leads to changes in mitochondrial morphology and function. Mitochondria in distal immature oocytes are fragmented, produce high levels of reactive oxygen species (ROS) and have high membrane potential, indicative of metabolic inactivity. In contrast, mitochondria in proximal mature oocytes are tubular with lower ROS levels and membrane potential, indicative of an active metabolic state required for aggregate mobilization before clearance. Involved in receptor-mediated endocytosis. The polypeptide is V-type proton ATPase catalytic subunit A (Caenorhabditis elegans).